Reading from the N-terminus, the 422-residue chain is Isocitrate dehydrogenase [NADP] (422 aa).

NADP(+) is bound at residue Thr-94. Positions 103, 105, 109, 119, and 143 each coordinate D-threo-isocitrate. Asp-310 is a binding site for Mg(2+). Residues 344-350 (HGTAPKY), Asn-357, Tyr-396, and Arg-400 each bind NADP(+).

This sequence belongs to the isocitrate and isopropylmalate dehydrogenases family. Homodimer. The cofactor is Mg(2+). It depends on Mn(2+) as a cofactor.

The enzyme catalyses D-threo-isocitrate + NADP(+) = 2-oxoglutarate + CO2 + NADPH. In terms of biological role, catalyzes the oxidative decarboxylation of isocitrate to 2-oxoglutarate and carbon dioxide with the concomitant reduction of NADP(+). The polypeptide is Isocitrate dehydrogenase [NADP] (icd) (Staphylococcus aureus (strain COL)).